We begin with the raw amino-acid sequence, 973 residues long: UvrABC system protein A (973 aa).

An ATP-binding site is contributed by 34 to 41; it reads GLSGSGKS. 2 ABC transporter domains span residues 330–609 and 629–958; these read WAKS…PNSI and AKKN…QFLK. 662 to 669 lines the ATP pocket; that stretch reads GVSGGGKS. A C4-type zinc finger spans residues 761 to 787; the sequence is CEACQGDGVIKIEMHFLPDVYVTCDVC.

The protein belongs to the ABC transporter superfamily. UvrA family. In terms of assembly, forms a heterotetramer with UvrB during the search for lesions.

The protein localises to the cytoplasm. Its function is as follows. The UvrABC repair system catalyzes the recognition and processing of DNA lesions. UvrA is an ATPase and a DNA-binding protein. A damage recognition complex composed of 2 UvrA and 2 UvrB subunits scans DNA for abnormalities. When the presence of a lesion has been verified by UvrB, the UvrA molecules dissociate. In Mesorhizobium japonicum (strain LMG 29417 / CECT 9101 / MAFF 303099) (Mesorhizobium loti (strain MAFF 303099)), this protein is UvrABC system protein A.